The primary structure comprises 380 residues: Glutamine synthetase, chloroplastic (380 aa).

The GS beta-grasp domain maps to 35-125 (MAAEYIWADG…VMCEVFAPDG (91 aa)). A GS catalytic domain is found at 132-380 (TRAKLREIID…RLLIKTVLKG (249 aa)).

This sequence belongs to the glutamine synthetase family. In terms of assembly, homooctamer.

The protein localises to the plastid. Its subcellular location is the chloroplast. The enzyme catalyses L-glutamate + NH4(+) + ATP = L-glutamine + ADP + phosphate + H(+). This Chlamydomonas reinhardtii (Chlamydomonas smithii) protein is Glutamine synthetase, chloroplastic (GLN2).